An 807-amino-acid polypeptide reads, in one-letter code: Oxysterol-binding protein 1 (807 aa).

Residue Ala2 is modified to N-acetylalanine. The segment at 61-86 (GAGGVAAAGPAPAPPTGGSGGSGAGG) is disordered. Positions 77–86 (GGSGGSGAGG) are enriched in gly residues. The region spanning 88 to 181 (GSAREGWLFK…WVTALELAKA (94 aa)) is the PH domain. Residue 117–122 (LSYYRS) coordinates a 1,2-diacyl-sn-glycero-3-phospho-(1D-myo-inositol 4-phosphate). 5 positions are modified to phosphoserine: Ser190, Ser193, Ser198, Ser238, and Ser240. A coiled-coil region spans residues 291-326 (QKSLQYERDQRIRLEETLEQLAKQHNHLERAFRGAT). A 20-hydroxycholesterol-binding site is contributed by Gln314. Residue Gln314 participates in 25-hydroxycholesterol binding. Gln314 contributes to the 7beta-hydroxycholesterol binding site. Gln314 contacts cholesterol. Position 314 (Gln314) interacts with ergosterol. The tract at residues 329-353 (PANTPGNVGSGKDQCCSGKGDMSDE) is disordered. 3 positions are modified to phosphoserine: Ser338, Ser345, and Ser351. Residues 358–364 (EFFDAPE) carry the FFAT motif. Position 377 is a phosphothreonine (Thr377). Phosphoserine occurs at positions 379, 382, 385, 386, and 389. A 1,2-diacyl-sn-glycero-3-phospho-(1D-myo-inositol 4-phosphate) is bound by residues 493–496 (KPFN) and 522–523 (HH). Residues 710–759 (TAPTDSRLRPDQRLMENGRWDEANAEKQRLEEKQRLSRKKREAEAMKATE) are disordered. Over residues 715–759 (SRLRPDQRLMENGRWDEANAEKQRLEEKQRLSRKKREAEAMKATE) the composition is skewed to basic and acidic residues. Residues 730–760 (DEANAEKQRLEEKQRLSRKKREAEAMKATED) are a coiled coil.

The protein belongs to the OSBP family. In terms of assembly, homodimer or homotrimer. Interacts (via FFAT motif) with VAPA. Interacts (via C-terminus) with RELCH (via the third HEAT repeat). Found in a complex composed of RELCH, OSBP1 and RAB11A. In terms of tissue distribution, widely expressed.

The protein resides in the cytoplasm. Its subcellular location is the cytosol. The protein localises to the perinuclear region. It localises to the golgi apparatus membrane. It is found in the endoplasmic reticulum membrane. The protein resides in the golgi apparatus. Its subcellular location is the trans-Golgi network. In terms of biological role, lipid transporter involved in lipid countertransport between the Golgi complex and membranes of the endoplasmic reticulum: specifically exchanges sterol with phosphatidylinositol 4-phosphate (PI4P), delivering sterol to the Golgi in exchange for PI4P, which is degraded by the SAC1/SACM1L phosphatase in the endoplasmic reticulum. Binds cholesterol and a range of oxysterols including 25-hydroxycholesterol. Cholesterol binding promotes the formation of a complex with PP2A and a tyrosine phosphatase which dephosphorylates ERK1/2, whereas 25-hydroxycholesterol causes its disassembly. Regulates cholesterol efflux by decreasing ABCA1 stability. The sequence is that of Oxysterol-binding protein 1 from Homo sapiens (Human).